Consider the following 185-residue polypeptide: TATA-box-binding protein 2 (185 aa).

2 tandem repeats follow at residues 7-84 (IENI…ANEL) and 100-178 (VQNV…KTQL).

Belongs to the TBP family.

Functionally, general factor that plays a role in the activation of archaeal genes transcribed by RNA polymerase. Binds specifically to the TATA box promoter element which lies close to the position of transcription initiation. The polypeptide is TATA-box-binding protein 2 (Methanosarcina acetivorans (strain ATCC 35395 / DSM 2834 / JCM 12185 / C2A)).